The chain runs to 179 residues: Plasmid-derived single-stranded DNA-binding protein (179 aa).

The region spanning 6 to 110 (INKVILVGRL…ILVKTTGTMQ (105 aa)) is the SSB domain. Residues 55-61 (WHRVVLF) mediate DNA binding. The interval 117–179 (GAQTQPEEGQ…DYGFSDDIPF (63 aa)) is disordered. The segment covering 118–132 (AQTQPEEGQQFSGQP) has biased composition (polar residues). Residues 145 to 155 (GGAKTKGRGRK) show a composition bias toward basic residues. Positions 167-179 (EGDDYGFSDDIPF) are enriched in acidic residues.

In terms of assembly, homotetramer.

In terms of biological role, may contribute to the conjugative processing of DNA. It has a functional relationship with Psi (plasmid-mediated sos inhibition) proteins. The chain is Plasmid-derived single-stranded DNA-binding protein (ssbF) from Escherichia coli (strain K12).